A 242-amino-acid polypeptide reads, in one-letter code: Pyridoxine 5'-phosphate synthase (242 aa).

Asparagine 6 is a binding site for 3-amino-2-oxopropyl phosphate. Residue 8–9 (DH) coordinates 1-deoxy-D-xylulose 5-phosphate. Arginine 17 contributes to the 3-amino-2-oxopropyl phosphate binding site. Histidine 42 (proton acceptor) is an active-site residue. 1-deoxy-D-xylulose 5-phosphate contacts are provided by arginine 44 and histidine 49. Catalysis depends on glutamate 69, which acts as the Proton acceptor. Threonine 99 contacts 1-deoxy-D-xylulose 5-phosphate. Histidine 190 (proton donor) is an active-site residue. 3-amino-2-oxopropyl phosphate is bound by residues glycine 191 and 212-213 (GH).

This sequence belongs to the PNP synthase family. In terms of assembly, homooctamer; tetramer of dimers.

It is found in the cytoplasm. The catalysed reaction is 3-amino-2-oxopropyl phosphate + 1-deoxy-D-xylulose 5-phosphate = pyridoxine 5'-phosphate + phosphate + 2 H2O + H(+). The protein operates within cofactor biosynthesis; pyridoxine 5'-phosphate biosynthesis; pyridoxine 5'-phosphate from D-erythrose 4-phosphate: step 5/5. In terms of biological role, catalyzes the complicated ring closure reaction between the two acyclic compounds 1-deoxy-D-xylulose-5-phosphate (DXP) and 3-amino-2-oxopropyl phosphate (1-amino-acetone-3-phosphate or AAP) to form pyridoxine 5'-phosphate (PNP) and inorganic phosphate. In Neisseria meningitidis serogroup A / serotype 4A (strain DSM 15465 / Z2491), this protein is Pyridoxine 5'-phosphate synthase.